Reading from the N-terminus, the 177-residue chain is Large ribosomal subunit protein uL6 (177 aa).

Belongs to the universal ribosomal protein uL6 family. As to quaternary structure, part of the 50S ribosomal subunit.

Its function is as follows. This protein binds to the 23S rRNA, and is important in its secondary structure. It is located near the subunit interface in the base of the L7/L12 stalk, and near the tRNA binding site of the peptidyltransferase center. In Mannheimia succiniciproducens (strain KCTC 0769BP / MBEL55E), this protein is Large ribosomal subunit protein uL6.